Here is a 375-residue protein sequence, read N- to C-terminus: Succinyl-diaminopimelate desuccinylase (375 aa).

H66 lines the Zn(2+) pocket. The active site involves D68. D99 is a Zn(2+) binding site. E133 acts as the Proton acceptor in catalysis. The Zn(2+) site is built by E134, E162, and H348.

Belongs to the peptidase M20A family. DapE subfamily. Homodimer. Zn(2+) is required as a cofactor. The cofactor is Co(2+).

It catalyses the reaction N-succinyl-(2S,6S)-2,6-diaminopimelate + H2O = (2S,6S)-2,6-diaminopimelate + succinate. It participates in amino-acid biosynthesis; L-lysine biosynthesis via DAP pathway; LL-2,6-diaminopimelate from (S)-tetrahydrodipicolinate (succinylase route): step 3/3. Functionally, catalyzes the hydrolysis of N-succinyl-L,L-diaminopimelic acid (SDAP), forming succinate and LL-2,6-diaminopimelate (DAP), an intermediate involved in the bacterial biosynthesis of lysine and meso-diaminopimelic acid, an essential component of bacterial cell walls. This Shigella flexneri serotype 5b (strain 8401) protein is Succinyl-diaminopimelate desuccinylase.